A 467-amino-acid polypeptide reads, in one-letter code: Argininosuccinate lyase (467 aa).

Belongs to the lyase 1 family. Argininosuccinate lyase subfamily.

It is found in the cytoplasm. The enzyme catalyses 2-(N(omega)-L-arginino)succinate = fumarate + L-arginine. It participates in amino-acid biosynthesis; L-arginine biosynthesis; L-arginine from L-ornithine and carbamoyl phosphate: step 3/3. This chain is Argininosuccinate lyase, found in Chromohalobacter salexigens (strain ATCC BAA-138 / DSM 3043 / CIP 106854 / NCIMB 13768 / 1H11).